The following is a 115-amino-acid chain: MSEQITSAKATAKTVRTSPRKARLVIDLIRGKSVADAISILKFTPNKSAGIIEKVLMSAVANAENNFDLDVESLVVSEAFVNEGPTMKRFRPRAKGSASPINKRTSHITVVVTEK.

This sequence belongs to the universal ribosomal protein uL22 family. As to quaternary structure, part of the 50S ribosomal subunit.

Functionally, this protein binds specifically to 23S rRNA; its binding is stimulated by other ribosomal proteins, e.g. L4, L17, and L20. It is important during the early stages of 50S assembly. It makes multiple contacts with different domains of the 23S rRNA in the assembled 50S subunit and ribosome. Its function is as follows. The globular domain of the protein is located near the polypeptide exit tunnel on the outside of the subunit, while an extended beta-hairpin is found that lines the wall of the exit tunnel in the center of the 70S ribosome. This chain is Large ribosomal subunit protein uL22, found in Enterococcus faecalis (strain ATCC 700802 / V583).